The primary structure comprises 202 residues: Holliday junction branch migration complex subunit RuvA (202 aa).

The interval 1-64 (MFAYIRGRLE…EDVISLYGFL (64 aa)) is domain I. The segment at 65–143 (TQEELNVFEL…KEQLTEYAQS (79 aa)) is domain II. The interval 144–152 (EEGGKVLDT) is flexible linker. Residues 152–202 (TDSSKMAEAVSALMVLGYSPAEANKAVSAVYREDMDIETIIKNALKGLARP) form a domain III region.

The protein belongs to the RuvA family. As to quaternary structure, homotetramer. Forms an RuvA(8)-RuvB(12)-Holliday junction (HJ) complex. HJ DNA is sandwiched between 2 RuvA tetramers; dsDNA enters through RuvA and exits via RuvB. An RuvB hexamer assembles on each DNA strand where it exits the tetramer. Each RuvB hexamer is contacted by two RuvA subunits (via domain III) on 2 adjacent RuvB subunits; this complex drives branch migration. In the full resolvosome a probable DNA-RuvA(4)-RuvB(12)-RuvC(2) complex forms which resolves the HJ.

It localises to the cytoplasm. Functionally, the RuvA-RuvB-RuvC complex processes Holliday junction (HJ) DNA during genetic recombination and DNA repair, while the RuvA-RuvB complex plays an important role in the rescue of blocked DNA replication forks via replication fork reversal (RFR). RuvA specifically binds to HJ cruciform DNA, conferring on it an open structure. The RuvB hexamer acts as an ATP-dependent pump, pulling dsDNA into and through the RuvAB complex. HJ branch migration allows RuvC to scan DNA until it finds its consensus sequence, where it cleaves and resolves the cruciform DNA. This chain is Holliday junction branch migration complex subunit RuvA, found in Acetivibrio thermocellus (strain ATCC 27405 / DSM 1237 / JCM 9322 / NBRC 103400 / NCIMB 10682 / NRRL B-4536 / VPI 7372) (Clostridium thermocellum).